The following is a 264-amino-acid chain: Short chain dehydrogenase/reductase dmxR18 (264 aa).

NADP(+) contacts are provided by Ile-24, Asp-70, Asn-97, and Arg-130. Residues Ser-146 and Ser-147 each act as proton donor in the active site. Residues Tyr-161, Lys-165, and Thr-196 each coordinate NADP(+). Tyr-161 acts as the Proton acceptor in catalysis. The active-site Lowers pKa of active site Tyr is Lys-165.

This sequence belongs to the short-chain dehydrogenases/reductases (SDR) family.

The enzyme catalyses 3,8,9,10-tetrahydroxy-6-methyl-1,4-dihydroanthracen-1-one + NADPH + H(+) = (3R)-3,8,9,10-tetrahydroxy-6-methyl-1,2,3,4-tetrahydroanthracen-1-one + NADP(+). It functions in the pathway secondary metabolite biosynthesis. Functionally, short chain dehydrogenase/reductase; part of the gene cluster that mediates the biosynthesis of the dimeric xanthones cryptosporioptides. The pathway begins with the synthesis of atrochrysone thioester by the polyketide synthase dmx-nrPKS. The atrochrysone carboxyl ACP thioesterase dmxR1 then breaks the thioester bond and releases the atrochrysone carboxylic acid from dmx-nrPKS. Atrochrysone carboxylic acid is decarboxylated by the decarboxylase dmxR15, and oxidized by the anthrone oxygenase dmxR16 to yield emodin. Emodin is then reduced to emodin hydroquinone by the oxidoreductase dmxR7. A-ring reduction by the short chain dehydrogenase dmxR18, dehydration by the scytalone dehydratase-like protein dmxR17 and probable spontaneous re-oxidation, results in overall deoxygenation to chrysophanol. Baeyer-Villiger oxidation by the Baeyer-Villiger monooxygenase (BVMO) dmxR6 then yields monodictylactone in equilibrium with monodictyphenone. In the case of the cryptosporioptides biosynthesis, monodictylactone is reduced at C-12 to an alcohol (by the short chain dehydrogenases dmxR12 or dmxR8) and hydroxylated at C-5 by dmxR9, yielding the electron-rich aromatic which could eliminate H(2)O to form the ortho-quinonemethide, followed by tautomerisation to paraquinone and complete the formal reduction to produce the 10-methylgroup. Conjugate addition of C-4a-OH to the resulting paraquinone by the monooxygenase dmxR10 then gives cyclohexadienone, which is then reduced at C-5 by the short chain dehydrogenase dmxR3 to give the dihydroxanthone. The 6,7-epoxide in the cryptosporioptides could be introduced by the cytochrome P450 monooxygenase dmxL3. The highly reducing PKS dmxL2 manufactures butyrate, which is further carboxylated by dmxL1 to form ethylmalonate. It is not yet clear whether the carboxylation occurs while the butyrate is attached to the ACP of dmxL2, but this unusual fungal metabolite could then be esterified to O-5 by the O-acetyltransferase dmxR13. Finally, dimerization performed by dmxR5 gives the observed dimers cryptosporioptides A, B and C as the final products of the pathway. The polypeptide is Short chain dehydrogenase/reductase dmxR18 (Cryptosporiopsis sp. (strain 8999)).